Consider the following 379-residue polypeptide: MSTVFPEDSVGLVVPQTARFDEPLALACGRSLASYELVYETYGTLNASASNAVLICHALSGHHHAAGYHAATDRKPGWWDSCIGPGKPIDTNRFFVVSLNNLGGCNGSTGPSSVNPATGKPYGADFPVLTVEDWVHSQVRLGERLGIQQWAAVVGGSLGGMQALQWTISYPERVRHCVDIASAPKLSAQNIAFNEVARQAILTDPEFHGGSFQDQGVIPKRGLMLARMVGHITYLSDDSMGEKFGRELKSDKLNYDFHSVEFQVESYLRYQGEEFSGRFDANTYLLMTKALDYFDPAATHGGDLAATLAHVTADYCIMSFTTDWRFSPARSREIVDALMAARKNVCYLEIDSPYGHDAFLIPTPRYMQGFSNYMNRIAI.

The AB hydrolase-1 domain maps to 51–360; it reads NAVLICHALS…DSPYGHDAFL (310 aa). S157 functions as the Nucleophile in the catalytic mechanism. R227 serves as a coordination point for substrate. Active-site residues include D323 and H356. D357 is a binding site for substrate.

It belongs to the AB hydrolase superfamily. MetX family. As to quaternary structure, homodimer.

It is found in the cytoplasm. The catalysed reaction is L-homoserine + succinyl-CoA = O-succinyl-L-homoserine + CoA. It functions in the pathway amino-acid biosynthesis; L-methionine biosynthesis via de novo pathway; O-succinyl-L-homoserine from L-homoserine: step 1/1. With respect to regulation, requires MetW for activity. Its function is as follows. Transfers a succinyl group from succinyl-CoA to L-homoserine, forming succinyl-L-homoserine. This Pseudomonas putida (strain ATCC 47054 / DSM 6125 / CFBP 8728 / NCIMB 11950 / KT2440) protein is Homoserine O-succinyltransferase.